A 328-amino-acid chain; its full sequence is UPF0421 protein SAUSA300_1870 (328 aa).

4 helical membrane passes run 19–39 (IAIF…IYAI), 61–81 (LPAT…FGDQ), 108–128 (VAVL…IFNF), and 132–152 (TLTA…VFPP).

The protein belongs to the UPF0421 family.

Its subcellular location is the cell membrane. The polypeptide is UPF0421 protein SAUSA300_1870 (Staphylococcus aureus (strain USA300)).